The chain runs to 167 residues: N5-carboxyaminoimidazole ribonucleotide mutase (167 aa).

Residues S11, D14, and R41 each contribute to the substrate site.

It belongs to the AIR carboxylase family. Class I subfamily.

It carries out the reaction 5-carboxyamino-1-(5-phospho-D-ribosyl)imidazole + H(+) = 5-amino-1-(5-phospho-D-ribosyl)imidazole-4-carboxylate. It functions in the pathway purine metabolism; IMP biosynthesis via de novo pathway; 5-amino-1-(5-phospho-D-ribosyl)imidazole-4-carboxylate from 5-amino-1-(5-phospho-D-ribosyl)imidazole (N5-CAIR route): step 2/2. Its function is as follows. Catalyzes the conversion of N5-carboxyaminoimidazole ribonucleotide (N5-CAIR) to 4-carboxy-5-aminoimidazole ribonucleotide (CAIR). In Aquifex aeolicus (strain VF5), this protein is N5-carboxyaminoimidazole ribonucleotide mutase.